A 513-amino-acid chain; its full sequence is Ectonucleoside triphosphate diphosphohydrolase 1 (513 aa).

Over 1-16 (MEDRRESELKVFCSKN) the chain is Cytoplasmic. The chain crosses the membrane as a helical span at residues 17-37 (ILSILGFSCIIAVIALLALGL). At 38–481 (TQNKALPENV…SPPLPHSTYV (444 aa)) the chain is on the extracellular side. The N-linked (GlcNAc...) asparagine glycan is linked to Asn73. The active-site Proton acceptor is the Glu174. N-linked (GlcNAc...) asparagine glycans are attached at residues Asn227 and Asn245. Intrachain disulfides connect Cys255-Cys300 and Cys281-Cys327. N-linked (GlcNAc...) asparagine glycosylation is found at Asn307 and Asn336. Cys340 and Cys345 are oxidised to a cystine. Asn373 is a glycosylation site (N-linked (GlcNAc...) asparagine). A disulfide bridge connects residues Cys393 and Cys416. Residue Asn460 is glycosylated (N-linked (GlcNAc...) asparagine). A helical membrane pass occupies residues 482-502 (FLMVLFSLILLAVIIVGIVVF). At 503–513 (HKPSYFWKDMV) the chain is on the cytoplasmic side.

It belongs to the GDA1/CD39 NTPase family. As to quaternary structure, homodimer; disulfide-linked. Ca(2+) serves as cofactor. Requires Mg(2+) as cofactor. Post-translationally, N-glycosylated. The N-terminus is blocked. In terms of processing, palmitoylated on Cys-13; which is required for caveola targeting.

Its subcellular location is the membrane. The protein resides in the caveola. The catalysed reaction is a ribonucleoside 5'-triphosphate + 2 H2O = a ribonucleoside 5'-phosphate + 2 phosphate + 2 H(+). It carries out the reaction a ribonucleoside 5'-triphosphate + H2O = a ribonucleoside 5'-diphosphate + phosphate + H(+). The enzyme catalyses a ribonucleoside 5'-diphosphate + H2O = a ribonucleoside 5'-phosphate + phosphate + H(+). It catalyses the reaction ATP + 2 H2O = AMP + 2 phosphate + 2 H(+). The catalysed reaction is ATP + H2O = ADP + phosphate + H(+). It carries out the reaction ADP + H2O = AMP + phosphate + H(+). The enzyme catalyses CTP + 2 H2O = CMP + 2 phosphate + 2 H(+). It catalyses the reaction CTP + H2O = CDP + phosphate + H(+). The catalysed reaction is CDP + H2O = CMP + phosphate + H(+). It carries out the reaction GTP + 2 H2O = GMP + 2 phosphate + 2 H(+). The enzyme catalyses GTP + H2O = GDP + phosphate + H(+). It catalyses the reaction GDP + H2O = GMP + phosphate + H(+). The catalysed reaction is ITP + 2 H2O = IMP + 2 phosphate + 2 H(+). It carries out the reaction ITP + H2O = IDP + phosphate + H(+). The enzyme catalyses IDP + H2O = IMP + phosphate + H(+). It catalyses the reaction UTP + 2 H2O = UMP + 2 phosphate + 2 H(+). The catalysed reaction is UTP + H2O = UDP + phosphate + H(+). It carries out the reaction UDP + H2O = UMP + phosphate + H(+). Functionally, catalyzes the hydrolysis of both di- and triphosphate nucleotides (NDPs and NTPs) and hydrolyze NTPs to nucleotide monophosphates (NMPs) in two distinct successive phosphate-releasing steps, with NDPs as intermediates and participates in the regulation of extracellular levels of nucleotides. By hydrolyzing proinflammatory ATP and platelet-activating ADP to AMP, it blocks platelet aggregation and supports blood flow. The chain is Ectonucleoside triphosphate diphosphohydrolase 1 from Bos taurus (Bovine).